We begin with the raw amino-acid sequence, 186 residues long: Large ribosomal subunit protein uL5c (186 aa).

Belongs to the universal ribosomal protein uL5 family. Part of the 50S ribosomal subunit; contacts the 5S rRNA.

The protein localises to the plastid. It localises to the chloroplast. In terms of biological role, binds 5S rRNA, forms part of the central protuberance of the 50S subunit. The polypeptide is Large ribosomal subunit protein uL5c (rpl5) (Pleurastrum terricola (Filamentous green alga)).